Reading from the N-terminus, the 346-residue chain is Iron uptake protein A2 (346 aa).

The segment at residues 1 to 31 (MTTKISRRTFFVGGTALTALVVANLPRRASA) is a signal peptide (tat-type signal). Fe cation is bound by residues His43, Tyr44, Tyr169, Tyr225, and Tyr226.

The protein belongs to the bacterial solute-binding protein 1 family. Post-translationally, predicted to be exported by the Tat system. The position of the signal peptide cleavage has not been experimentally proven.

The protein resides in the cellular thylakoid membrane. It is found in the periplasm. Probably part of a periplasmic ABC transporter complex futA1A2BC (TC 3.A.1.10.2) involved in Fe(3+) ion import (ferric iron). This protein and futA1 (slr1295) are subunit proteins that have redundant or overlapping substrate-binding functions. The differing subcellular locations of futA1 (predominantly thylakoid lumen) and futA2 (predominantly periplasmic) suggest they may fulfill different roles. Its function is as follows. Plays an important role in protecting the acceptor side of photosystem II (PSII) against oxidative damage, especially under iron-limiting growth conditions. In terms of biological role, plays an undefined role in copper supply to thylakoid proteins. The polypeptide is Iron uptake protein A2 (futA2) (Synechocystis sp. (strain ATCC 27184 / PCC 6803 / Kazusa)).